The following is a 111-amino-acid chain: MAGKQAVSASGKWLDGIRKWYYNAAGFNKLGLMRDDTIYEDEDVKEAIRRLPENLYNDRMFRIKRALDLSLKHQILPKEQWTKYEEENFYLEPYLKEVIRERKEREEWAKK.

Ala2 carries the N-acetylalanine modification. Lys12 is modified (N6-acetyllysine; alternate). At Lys12 the chain carries N6-succinyllysine; alternate. Lys19 is modified (N6-acetyllysine). An N6-acetyllysine; alternate modification is found at Lys78. At Lys78 the chain carries N6-succinyllysine; alternate. Lys83 and Lys96 each carry N6-acetyllysine.

It belongs to the UQCRB/QCR7 family. In terms of assembly, component of the ubiquinol-cytochrome c oxidoreductase (cytochrome b-c1 complex, complex III, CIII), a multisubunit enzyme composed of 11 subunits. The complex is composed of 3 respiratory subunits cytochrome b, cytochrome c1 and Rieske protein UQCRFS1, 2 core protein subunits UQCRC1/QCR1 and UQCRC2/QCR2, and 6 low-molecular weight protein subunits UQCRH/QCR6, UQCRB/QCR7, UQCRQ/QCR8, UQCR10/QCR9, UQCR11/QCR10 and subunit 9, the cleavage product of Rieske protein UQCRFS1. The complex exists as an obligatory dimer and forms supercomplexes (SCs) in the inner mitochondrial membrane with NADH-ubiquinone oxidoreductase (complex I, CI) and cytochrome c oxidase (complex IV, CIV), resulting in different assemblies (supercomplex SCI(1)III(2)IV(1) and megacomplex MCI(2)III(2)IV(2)).

Its subcellular location is the mitochondrion inner membrane. Component of the ubiquinol-cytochrome c oxidoreductase, a multisubunit transmembrane complex that is part of the mitochondrial electron transport chain which drives oxidative phosphorylation. The respiratory chain contains 3 multisubunit complexes succinate dehydrogenase (complex II, CII), ubiquinol-cytochrome c oxidoreductase (cytochrome b-c1 complex, complex III, CIII) and cytochrome c oxidase (complex IV, CIV), that cooperate to transfer electrons derived from NADH and succinate to molecular oxygen, creating an electrochemical gradient over the inner membrane that drives transmembrane transport and the ATP synthase. The cytochrome b-c1 complex catalyzes electron transfer from ubiquinol to cytochrome c, linking this redox reaction to translocation of protons across the mitochondrial inner membrane, with protons being carried across the membrane as hydrogens on the quinol. In the process called Q cycle, 2 protons are consumed from the matrix, 4 protons are released into the intermembrane space and 2 electrons are passed to cytochrome c. The chain is Cytochrome b-c1 complex subunit 7 (UQCRB) from Pongo abelii (Sumatran orangutan).